A 602-amino-acid chain; its full sequence is Proteasome-associated ATPase (602 aa).

Residues 1–17 are compositionally biased toward low complexity; sequence MSGPRSGSGSDGSTGRP. Positions 1–31 are disordered; it reads MSGPRSGSGSDGSTGRPGDAESRRSAYEKET. The segment covering 18–31 has biased composition (basic and acidic residues); sequence GDAESRRSAYEKET. Residues 19–106 adopt a coiled-coil conformation; the sequence is DAESRRSAYE…LKEEVDRLAQ (88 aa). Residue 289–294 participates in ATP binding; it reads GCGKTL. Residues 601-602 form a docks into pockets in the proteasome alpha-ring region; the sequence is YL.

It belongs to the AAA ATPase family. In terms of assembly, homohexamer. Assembles into a hexameric ring structure that caps the 20S proteasome core. Strongly interacts with the prokaryotic ubiquitin-like protein Pup through a hydrophobic interface; the interacting region of ARC lies in its N-terminal coiled-coil domain. There is one Pup binding site per ARC hexamer ring. Upon ATP-binding, the C-terminus of ARC interacts with the alpha-rings of the proteasome core, possibly by binding to the intersubunit pockets.

It participates in protein degradation; proteasomal Pup-dependent pathway. ATPase which is responsible for recognizing, binding, unfolding and translocation of pupylated proteins into the bacterial 20S proteasome core particle. May be essential for opening the gate of the 20S proteasome via an interaction with its C-terminus, thereby allowing substrate entry and access to the site of proteolysis. Thus, the C-termini of the proteasomal ATPase may function like a 'key in a lock' to induce gate opening and therefore regulate proteolysis. This chain is Proteasome-associated ATPase, found in Frankia casuarinae (strain DSM 45818 / CECT 9043 / HFP020203 / CcI3).